Reading from the N-terminus, the 945-residue chain is Isoleucine--tRNA ligase (945 aa).

The span at 1–10 (MSNKKADSKP) shows a compositional bias: basic and acidic residues. Positions 1 to 21 (MSNKKADSKPQAKYPVNLLDT) are disordered. Positions 66-76 (PYANGDIHLGH) match the 'HIGH' region motif. Position 581 (glutamate 581) interacts with L-isoleucyl-5'-AMP. Residues 622-626 (KMSKS) carry the 'KMSKS' region motif. Residue lysine 625 coordinates ATP. 4 residues coordinate Zn(2+): cysteine 908, cysteine 911, cysteine 928, and cysteine 931.

Belongs to the class-I aminoacyl-tRNA synthetase family. IleS type 1 subfamily. Monomer. Zn(2+) serves as cofactor.

It is found in the cytoplasm. It catalyses the reaction tRNA(Ile) + L-isoleucine + ATP = L-isoleucyl-tRNA(Ile) + AMP + diphosphate. Catalyzes the attachment of isoleucine to tRNA(Ile). As IleRS can inadvertently accommodate and process structurally similar amino acids such as valine, to avoid such errors it has two additional distinct tRNA(Ile)-dependent editing activities. One activity is designated as 'pretransfer' editing and involves the hydrolysis of activated Val-AMP. The other activity is designated 'posttransfer' editing and involves deacylation of mischarged Val-tRNA(Ile). The chain is Isoleucine--tRNA ligase from Burkholderia multivorans (strain ATCC 17616 / 249).